The chain runs to 218 residues: Claudin-3 (218 aa).

Over 1–8 the chain is Cytoplasmic; that stretch reads MSMGLEIA. A helical transmembrane segment spans residues 9 to 29; the sequence is GTSLAVLGWLSTIVCCALPMW. At 30 to 80 the chain is on the extracellular side; that stretch reads RVTAFIGSSIITAQITWEGLWMNCVVQSTGQMQCKVYDSLLALPQDLQAAR. The chain crosses the membrane as a helical span at residues 81–101; that stretch reads ALIVVSILLAAFGLLVALVGA. Residues 102 to 115 lie on the Cytoplasmic side of the membrane; that stretch reads QCTNCVQDDTAKAK. The helical transmembrane segment at 116–136 threads the bilayer; it reads ITIVAGVLFLLAALLTLVPVS. Residues 137–159 lie on the Extracellular side of the membrane; it reads WSANTIIRDFYNPLVPDAQKREM. The helical transmembrane segment at 160 to 180 threads the bilayer; the sequence is GAGLYVGWAAAALQLLGGALL. Over 181 to 218 the chain is Cytoplasmic; sequence CCSCPPRDKKYAPTKIVYSAPRSAGPGTSTAYDRKDYV. Tyr-198 is subject to Phosphotyrosine. Phosphoserine is present on residues Ser-199 and Ser-209. Residues 217 to 218 are interactions with TJP1, TJP2 and TJP3; that stretch reads YV.

This sequence belongs to the claudin family. As to quaternary structure, can form homo- and heteropolymers with other CLDN. Homopolymers interact with CLDN1 and CLDN2 homopolymers. Interacts in cis (within the same plasma membrane) with CLDN19. Directly interacts with TJP1/ZO-1, TJP2/ZO-2 and TJP3/ZO-3.

The protein localises to the cell junction. It is found in the tight junction. The protein resides in the cell membrane. Plays a major role in tight junction-specific obliteration of the intercellular space, through calcium-independent cell-adhesion activity. In Canis lupus familiaris (Dog), this protein is Claudin-3 (CLDN3).